We begin with the raw amino-acid sequence, 590 residues long: Aspartate--tRNA ligase (590 aa).

Glutamate 174 provides a ligand contact to L-aspartate. The aspartate stretch occupies residues 198 to 201 (QLMK). Residue arginine 220 coordinates L-aspartate. ATP contacts are provided by residues 220 to 222 (RDE) and glutamine 229. An L-aspartate-binding site is contributed by histidine 443. An ATP-binding site is contributed by glutamate 484. Residue arginine 491 coordinates L-aspartate. 536–539 (GLDR) is an ATP binding site.

It belongs to the class-II aminoacyl-tRNA synthetase family. Type 1 subfamily. In terms of assembly, homodimer.

It is found in the cytoplasm. The enzyme catalyses tRNA(Asp) + L-aspartate + ATP = L-aspartyl-tRNA(Asp) + AMP + diphosphate. In terms of biological role, catalyzes the attachment of L-aspartate to tRNA(Asp) in a two-step reaction: L-aspartate is first activated by ATP to form Asp-AMP and then transferred to the acceptor end of tRNA(Asp). The sequence is that of Aspartate--tRNA ligase from Lactococcus lactis subsp. cremoris (strain MG1363).